The sequence spans 432 residues: Heme-based aerotactic transducer HemAT (432 aa).

A Methyl-accepting transducer domain is found at 184 to 420 (YNQTRDEQEE…EVSRAVSHVA (237 aa)).

This sequence belongs to the methyl-accepting chemotaxis (MCP) protein family. In terms of assembly, homotetramer.

Functionally, heme-containing signal transducer responsible for aerotaxis, the migratory response toward or away from oxygen. This is Heme-based aerotactic transducer HemAT (hemAT) from Bacillus subtilis (strain 168).